The sequence spans 868 residues: MKRIFYTLGLLLLCLPMLQAGPVTRSKAEQTAKNFFAKRQPTLSSSTASLRMDFVYKAAEREEALFFVFNRGEKDGFLLVAADDRFPEVIGYAFKGHFDAARMPDNLRGWLKGYEREMLAVMDGKAEPIDPIREAKPTRDLPSSIAPILETGEHASDPILWDQGYPFNTLHPLLPSGQQAYTGCVATAMGQIMRHYKWPEKASGEYDYYDDMTGTHTHYSGTFGETYNWSKMPGNISVGISPEEVKALSTFMRDVSFSVNMQFADFGSGTFSIFVERALRETFHYKKSLRYIHRSLLPGKEWKDMIRKELAENRPVYYAGADGSMGHAFVCDGYEPDGTFHFNWGWGGMSNGNFYLNLLNPGSLGTGAGDGGYSTDQEVVIGIEPASNEAPGIVPDPTITLYGLQHNMSDEALDLSVKIKNYSTYAGDVKLAYRLTLPNGTETTNPAVTVPIVWEDIIGESTGNITIPCSQFAEGKNTISILYRTDGMADWKELKHILMGLVNKIEVTMPAGDVAYSVADARIVLKDGSLSHNLKAYSDCKLSATVYNPGTEEFRSRVTFALRNTEGRLYFLGRHLVELHPGDEDGEKVSLTITGLKARAGQYMLVCTGDMELLMEDASWIELASIEVAEHTSTHSSLLVASNPQIDLLTVHRANPETLPTFSITNEGGATFSGKIEIVAIKAFSETFFQAKEEHMSLAQGETKVLSPELTANSSLYTNAELFPDGIYYIVIREQGFWDPIDLFGDYYYRIRLITDLSSSXIAGKDVSTIVLYPNPAHDYVHVAIPPTYAGSTLRLFDIQGRMQLSTKIRICRYASRRRTSSEGHLYRCGRRHGREALYSLIQSVNSKTDKGNAGWEIPSGHCPCTVC.

The N-terminal stretch at 1–27 is a signal peptide; the sequence is MKRIFYTLGLLLLCLPMLQAGPVTRSK. Residues Cys184 and His327 contribute to the active site.

It belongs to the peptidase C10 family.

Its function is as follows. Appears to be specific for arginine-containing peptide bonds. Possesses hemagglutinin activity. The chain is Thiol protease/hemagglutinin PrtT (prtT) from Porphyromonas gingivalis (Bacteroides gingivalis).